A 108-amino-acid chain; its full sequence is Bublin coiled-coil protein (108 aa).

Disordered stretches follow at residues 1 to 23 (MSGP…DDDF) and 67 to 108 (RLEF…DEGS). Positions 25-73 (SEEYEAINSMLDQINSYLDDLEERNDSLNGKLHELMESNRQARLEFRAQ) form a coiled coil. Residues 99 to 108 (ENDKKIDEGS) show a composition bias toward basic and acidic residues.

Belongs to the UPF0184 (EST00098) family.

The protein resides in the cell junction. Its subcellular location is the cytoplasm. It is found in the cytoskeleton. Essential for intermediate filament organization in intestinal cells, interacts with intermediate filament and regulates intestinal lumen morphology. This Takifugu rubripes (Japanese pufferfish) protein is Bublin coiled-coil protein (bbln).